The primary structure comprises 264 residues: 14-3-3 protein homolog (264 aa).

Residues Ser-236–Glu-258 show a composition bias toward low complexity. The disordered stretch occupies residues Ser-236–Glu-264.

It belongs to the 14-3-3 family.

The protein is 14-3-3 protein homolog (BMH1) of Candida albicans (strain SC5314 / ATCC MYA-2876) (Yeast).